A 111-amino-acid chain; its full sequence is MEIEKTNRMNTLFEFYATLLTDKQMNYIELYYADDYSLAEIAEEFNISRQAVYDNIKRTEKVLESYEEKLHLFSNYVVRNQLLEELMKKYPSDQYLISKLQEIQQIDEEEF.

Belongs to the UPF0122 family.

Might take part in the signal recognition particle (SRP) pathway. This is inferred from the conservation of its genetic proximity to ftsY/ffh. May be a regulatory protein. This is UPF0122 protein LACR_1522 from Lactococcus lactis subsp. cremoris (strain SK11).